Consider the following 180-residue polypeptide: FMN reductase (NADH) RutF (180 aa).

This sequence belongs to the non-flavoprotein flavin reductase family. RutF subfamily.

It catalyses the reaction FMNH2 + NAD(+) = FMN + NADH + 2 H(+). Functionally, catalyzes the reduction of FMN to FMNH2 which is used to reduce pyrimidine by RutA via the Rut pathway. The sequence is that of FMN reductase (NADH) RutF from Bradyrhizobium diazoefficiens (strain JCM 10833 / BCRC 13528 / IAM 13628 / NBRC 14792 / USDA 110).